Consider the following 265-residue polypeptide: Putative 2-aminoethylphosphonate transport system permease protein PhnV (265 aa).

6 helical membrane-spanning segments follow: residues 13-33 (GVVA…VILM), 69-89 (LTIG…AALA), 104-124 (VFYL…LVAF), 131-151 (MNGT…AFTF), 185-205 (LPLL…LSMG), and 233-253 (NIAD…LLMM). The ABC transmembrane type-1 domain occupies 65–253 (LLASLTIGFC…LVAITLLLMM (189 aa)).

This sequence belongs to the binding-protein-dependent transport system permease family.

The protein localises to the cell inner membrane. Its function is as follows. Probably part of the PhnSTUV complex (TC 3.A.1.11.5) involved in 2-aminoethylphosphonate import. Probably responsible for the translocation of the substrate across the membrane. The sequence is that of Putative 2-aminoethylphosphonate transport system permease protein PhnV (phnV) from Salmonella paratyphi A (strain ATCC 9150 / SARB42).